We begin with the raw amino-acid sequence, 812 residues long: Fibroblast growth factor receptor 1 (812 aa).

The signal sequence occupies residues 1-20 (MFSGMSLLLWGVLLGAALSV). At 21–371 (ARPPSTLPDE…PALLASPLQL (351 aa)) the chain is on the extracellular side. One can recognise an Ig-like C2-type 1 domain in the interval 25-118 (STLPDEVAPK…YTVLCSVNVS (94 aa)). A disulfide bridge connects residues Cys54 and Cys100. N-linked (GlcNAc...) asparagine glycans are attached at residues Asn76, Asn116, Asn133, Asn223, Asn236, Asn260, Asn292, Asn313, and Asn326. The segment at 121–153 (LPSAEDDDEDDDNSSSEEKAAENSKPNRPLWSH) is disordered. Residues 124 to 135 (AEDDDEDDDNSS) are compositionally biased toward acidic residues. 2 consecutive Ig-like C2-type domains span residues 154–242 (PEKM…YQLD) and 251–353 (PILQ…AWLT). Cys174 and Cys226 form a disulfide bridge. A disulfide bridge connects residues Cys273 and Cys337. The chain crosses the membrane as a helical span at residues 372–393 (EIIIYCTGAAFVSAMVVTIIIF). Residues 394 to 812 (KMKHPSKKSD…KYSNGGLKKR (419 aa)) lie on the Cytoplasmic side of the membrane. The residue at position 457 (Tyr457) is a Phosphotyrosine; by autocatalysis. Residues 472–761 (LILGKPLGEG…LALSSNQEYL (290 aa)) form the Protein kinase domain. ATP contacts are provided by residues 478-484 (LGEGCFG), Lys508, 556-558 (EYT), and Asn562. Residues Tyr577 and Tyr579 each carry the phosphotyrosine; by autocatalysis modification. The Proton acceptor role is filled by Asp617. Residues Arg621 and Asp635 each coordinate ATP. Residues Tyr647, Tyr648, Tyr724, and Tyr760 each carry the phosphotyrosine; by autocatalysis modification. Residues 784–812 (SGEDSMFSHDPLPDEPCLPKYSNGGLKKR) are disordered.

Belongs to the protein kinase superfamily. Tyr protein kinase family. Fibroblast growth factor receptor subfamily. Monomer. Homodimer after ligand binding. Interacts with il17rd. In terms of processing, autophosphorylated. Binding of FGF family members together with heparan sulfate proteoglycan or heparin promotes receptor dimerization and autophosphorylation on tyrosine residues. Autophosphorylation occurs in trans between the two FGFR molecules present in the dimer and proceeds in a highly ordered manner. Phosphotyrosine residues provide docking sites for interacting proteins and so are crucial for FGFR1 function and its regulation. Ubiquitinated. FGFR1 is rapidly ubiquitinated after autophosphorylation, leading to internalization and degradation. Post-translationally, N-glycosylated in the endoplasmic reticulum. The N-glycan chains undergo further maturation to an Endo H-resistant form in the Golgi apparatus.

The protein resides in the cell membrane. It is found in the nucleus. The protein localises to the cytoplasm. It localises to the cytosol. Its subcellular location is the cytoplasmic vesicle. It carries out the reaction L-tyrosyl-[protein] + ATP = O-phospho-L-tyrosyl-[protein] + ADP + H(+). Present in an inactive conformation in the absence of bound ligand. Ligand binding leads to dimerization and activation by sequential autophosphorylation on tyrosine residues. Tyrosine-protein kinase that acts as a cell-surface receptor for fibroblast growth factors and plays an essential role in the regulation of embryonic development, cell proliferation, differentiation and migration. Required for normal mesoderm patterning and normal skeletogenesis. Phosphorylates PLCG1, FRS2, GAB1 and SHB. Ligand binding leads to the activation of several signaling cascades. Activation of PLCG1 leads to the production of the cellular signaling molecules diacylglycerol and inositol-1,4,5-trisphosphate. Phosphorylation of FRS2 triggers recruitment of GRB2, GAB1, PIK3R1 and SOS1, and mediates activation of RAS, MAPK1/ERK2, MAPK3/ERK1 and the MAP kinase signaling pathway, as well as of the AKT1 signaling pathway. Promotes phosphorylation of SHC1, STAT1 and PTPN11/SHP2. In the nucleus, enhances RPS6KA1 and CREB1 activity and contributes to the regulation of transcription. FGFR1 signaling is down-regulated by ubiquitination, internalization and degradation. The chain is Fibroblast growth factor receptor 1 (fgfr1) from Xenopus laevis (African clawed frog).